The primary structure comprises 511 residues: Exodeoxyribonuclease 7 large subunit (511 aa).

The protein belongs to the XseA family. As to quaternary structure, heterooligomer composed of large and small subunits.

The protein localises to the cytoplasm. The catalysed reaction is Exonucleolytic cleavage in either 5'- to 3'- or 3'- to 5'-direction to yield nucleoside 5'-phosphates.. In terms of biological role, bidirectionally degrades single-stranded DNA into large acid-insoluble oligonucleotides, which are then degraded further into small acid-soluble oligonucleotides. The protein is Exodeoxyribonuclease 7 large subunit of Brucella canis (strain ATCC 23365 / NCTC 10854 / RM-666).